We begin with the raw amino-acid sequence, 285 residues long: 2-methoxy-6-polyprenyl-1,4-benzoquinol methylase, mitochondrial (285 aa).

A mitochondrion-targeting transit peptide spans 1–30 (MKGATNLFKSMRKPTNVGNFRQFSVNQVNS). S-adenosyl-L-methionine-binding positions include Thr-106, Asp-126, 156–157 (NA), and Ser-173.

The protein belongs to the class I-like SAM-binding methyltransferase superfamily. MenG/UbiE family. In terms of assembly, component of a multi-subunit COQ enzyme complex.

It localises to the mitochondrion inner membrane. It catalyses the reaction a 2-methoxy-6-(all-trans-polyprenyl)benzene-1,4-diol + S-adenosyl-L-methionine = a 5-methoxy-2-methyl-3-(all-trans-polyprenyl)benzene-1,4-diol + S-adenosyl-L-homocysteine + H(+). The protein operates within cofactor biosynthesis; ubiquinone biosynthesis. Its function is as follows. Methyltransferase required for the conversion of 2-polyprenyl-6-methoxy-1,4-benzoquinol (DDMQH2) to 2-polyprenyl-3-methyl-6-methoxy-1,4-benzoquinol (DMQH2). This chain is 2-methoxy-6-polyprenyl-1,4-benzoquinol methylase, mitochondrial, found in Caenorhabditis elegans.